The following is a 274-amino-acid chain: Rhamnulose-1-phosphate aldolase (274 aa).

E117 is a catalytic residue. Zn(2+) is bound by residues H141, H143, and H212.

Belongs to the aldolase class II family. RhaD subfamily. In terms of assembly, homotetramer. Requires Zn(2+) as cofactor.

The protein resides in the cytoplasm. The enzyme catalyses L-rhamnulose 1-phosphate = (S)-lactaldehyde + dihydroxyacetone phosphate. It participates in carbohydrate degradation; L-rhamnose degradation; glycerone phosphate from L-rhamnose: step 3/3. Catalyzes the reversible cleavage of L-rhamnulose-1-phosphate to dihydroxyacetone phosphate (DHAP) and L-lactaldehyde. This chain is Rhamnulose-1-phosphate aldolase, found in Pectobacterium atrosepticum (strain SCRI 1043 / ATCC BAA-672) (Erwinia carotovora subsp. atroseptica).